A 297-amino-acid polypeptide reads, in one-letter code: N-acetylmuramic acid 6-phosphate etherase (297 aa).

The SIS domain maps to 56 to 219; the sequence is AIEAFNKGGR…STISMIGIGK (164 aa). Residue E84 is the Proton donor of the active site. E115 is a catalytic residue.

The protein belongs to the GCKR-like family. MurNAc-6-P etherase subfamily. In terms of assembly, homodimer.

It carries out the reaction N-acetyl-D-muramate 6-phosphate + H2O = N-acetyl-D-glucosamine 6-phosphate + (R)-lactate. Its pathway is amino-sugar metabolism; N-acetylmuramate degradation. Specifically catalyzes the cleavage of the D-lactyl ether substituent of MurNAc 6-phosphate, producing GlcNAc 6-phosphate and D-lactate. The protein is N-acetylmuramic acid 6-phosphate etherase of Lactococcus lactis subsp. cremoris (strain SK11).